The following is a 129-amino-acid chain: Fluoride-specific ion channel FluC (129 aa).

4 helical membrane-spanning segments follow: residues 1–21 (MLMKQVSAFLLVGIGGFLGSA), 35–55 (GGLPLATFSVNIIGCFFIGFI), 71–91 (LFLVTGFCGGFTTFSSYIFEN), and 105–125 (AYLAGSVIGGFVALYSGTFFA). Na(+) is bound by residues Gly-79 and Thr-82.

This sequence belongs to the fluoride channel Fluc/FEX (TC 1.A.43) family.

The protein resides in the cell inner membrane. It catalyses the reaction fluoride(in) = fluoride(out). Na(+) is not transported, but it plays an essential structural role and its presence is essential for fluoride channel function. Its function is as follows. Fluoride-specific ion channel. Important for reducing fluoride concentration in the cell, thus reducing its toxicity. The polypeptide is Fluoride-specific ion channel FluC (Chlorobium phaeobacteroides (strain DSM 266 / SMG 266 / 2430)).